A 573-amino-acid chain; its full sequence is MAVLNQLPVLGMIKEFRRSWRALCSSERTTLCGPDSMLLALQLSMAENNKQHRGEFTVCLSDVLLTWKYFLHEKLNLPIENMKVVEHYEDIKKTYDDFLKNSNTLDLIDVYKKCSSLTSNYENNMISPIQLRDFLSGTEYAVSDEANPHMPESPVKCSQNDEQVRVLVKKIFFSYLSLLVNSKNDLALASILNIPDRGLGREAFTNLKHAAREKQLSMFLMATSFIRTLELGGKGYAPSPSDPLWAHVKGLSEFINFIDKLDEILGKIPNPSLAGSRILSAIKMQLIKGHSSGEPFYKAVEEVVQDLNLRIKNIINSQEGVAVSANNISPVPPKSFAINHDTAYCGRDAVKILLVLLDEDAASAPTRNKAELLYNDESTVPHSGPSVLTLFRSPTQEKNTSVKPLRERIHKSLQTEKNKMWQTLIRSQFACTYKDDCIMSKNKWHVNSSSKPLSALHLEDDVSEGAQSSVGKARIEASSENAHVGRWKGDKLPRKSTQRQISKGKQLDLDSENLHCDRGNELYQHKNIKIPKVPSGSHSKAGGKLAQGTKGNRCPARGKLIPGQTKLTQFFML.

Disordered stretches follow at residues 470 to 505 and 531 to 560; these read VGKARIEASSENAHVGRWKGDKLPRKSTQRQISKGK and PKVPSGSHSKAGGKLAQGTKGNRCPARGKL.

It belongs to the PARI family. Interacts with RAD51 and PCNA. Interacts with PARP1. Interacts with TASOR. Expressed in the ovary, Sertoli cells of the testis and in granular cells within the cerebellum.

The protein localises to the cytoplasm. It is found in the nucleus. Required to suppress inappropriate homologous recombination, thereby playing a central role DNA repair and in the maintenance of genomic stability. Antagonizes homologous recombination by interfering with the formation of the RAD51-DNA homologous recombination structure. Binds single-strand DNA and poly(A) homopolymers. Positively regulate the poly(ADP-ribosyl)ation activity of PARP1; however such function may be indirect. This is PCNA-interacting partner (Parpbp) from Mus musculus (Mouse).